Consider the following 548-residue polypeptide: Adenine deaminase (548 aa).

This sequence belongs to the metallo-dependent hydrolases superfamily. Adenine deaminase family. It depends on Mn(2+) as a cofactor.

It catalyses the reaction adenine + H2O + H(+) = hypoxanthine + NH4(+). The chain is Adenine deaminase from Borreliella afzelii (strain PKo) (Borrelia afzelii).